The sequence spans 51 residues: DNA-directed RNA polymerase subunit Rpo12 (51 aa).

Residues C14, C29, and C32 each contribute to the Zn(2+) site.

It belongs to the archaeal Rpo12/eukaryotic RPC10 RNA polymerase subunit family. In terms of assembly, part of the RNA polymerase complex. Requires Zn(2+) as cofactor.

Its subcellular location is the cytoplasm. The enzyme catalyses RNA(n) + a ribonucleoside 5'-triphosphate = RNA(n+1) + diphosphate. In terms of biological role, DNA-dependent RNA polymerase (RNAP) catalyzes the transcription of DNA into RNA using the four ribonucleoside triphosphates as substrates. The chain is DNA-directed RNA polymerase subunit Rpo12 from Methanopyrus kandleri (strain AV19 / DSM 6324 / JCM 9639 / NBRC 100938).